Consider the following 260-residue polypeptide: Tryptophan synthase alpha chain (260 aa).

Active-site proton acceptor residues include E52 and D63.

The protein belongs to the TrpA family. As to quaternary structure, tetramer of two alpha and two beta chains.

It catalyses the reaction (1S,2R)-1-C-(indol-3-yl)glycerol 3-phosphate + L-serine = D-glyceraldehyde 3-phosphate + L-tryptophan + H2O. Its pathway is amino-acid biosynthesis; L-tryptophan biosynthesis; L-tryptophan from chorismate: step 5/5. Its function is as follows. The alpha subunit is responsible for the aldol cleavage of indoleglycerol phosphate to indole and glyceraldehyde 3-phosphate. This is Tryptophan synthase alpha chain from Streptococcus thermophilus (strain ATCC BAA-491 / LMD-9).